The primary structure comprises 193 residues: Potassium-transporting ATPase KdpC subunit (193 aa).

A helical membrane pass occupies residues 10-30; sequence AAIIIFSVLTGVIYPALVTVI.

The protein belongs to the KdpC family. As to quaternary structure, the system is composed of three essential subunits: KdpA, KdpB and KdpC.

Its subcellular location is the cell membrane. Functionally, part of the high-affinity ATP-driven potassium transport (or Kdp) system, which catalyzes the hydrolysis of ATP coupled with the electrogenic transport of potassium into the cytoplasm. This subunit acts as a catalytic chaperone that increases the ATP-binding affinity of the ATP-hydrolyzing subunit KdpB by the formation of a transient KdpB/KdpC/ATP ternary complex. This is Potassium-transporting ATPase KdpC subunit from Herpetosiphon aurantiacus (strain ATCC 23779 / DSM 785 / 114-95).